The primary structure comprises 323 residues: DNA primase small subunit PriS (323 aa).

Active-site residues include Asp-97, Asp-99, and Asp-274.

It belongs to the eukaryotic-type primase small subunit family. In terms of assembly, heterodimer of a small subunit (PriS) and a large subunit (PriL). Mg(2+) is required as a cofactor. It depends on Mn(2+) as a cofactor.

Functionally, catalytic subunit of DNA primase, an RNA polymerase that catalyzes the synthesis of short RNA molecules used as primers for DNA polymerase during DNA replication. The small subunit contains the primase catalytic core and has DNA synthesis activity on its own. Binding to the large subunit stabilizes and modulates the activity, increasing the rate of DNA synthesis while decreasing the length of the DNA fragments, and conferring RNA synthesis capability. The DNA polymerase activity may enable DNA primase to also catalyze primer extension after primer synthesis. May also play a role in DNA repair. The chain is DNA primase small subunit PriS from Methanothermobacter thermautotrophicus (strain ATCC 29096 / DSM 1053 / JCM 10044 / NBRC 100330 / Delta H) (Methanobacterium thermoautotrophicum).